A 241-amino-acid polypeptide reads, in one-letter code: Carboxy-S-adenosyl-L-methionine synthase (241 aa).

Residues Tyr-38, Gly-63–Ser-65, Asp-88–Asn-89, Asp-116–Ile-117, Asn-131, and Arg-198 each bind S-adenosyl-L-methionine.

The protein belongs to the class I-like SAM-binding methyltransferase superfamily. Cx-SAM synthase family. As to quaternary structure, homodimer.

It catalyses the reaction prephenate + S-adenosyl-L-methionine = carboxy-S-adenosyl-L-methionine + 3-phenylpyruvate + H2O. Catalyzes the conversion of S-adenosyl-L-methionine (SAM) to carboxy-S-adenosyl-L-methionine (Cx-SAM). The chain is Carboxy-S-adenosyl-L-methionine synthase from Haemophilus influenzae (strain 86-028NP).